A 131-amino-acid polypeptide reads, in one-letter code: Small ribosomal subunit protein uS8 (131 aa).

Belongs to the universal ribosomal protein uS8 family. Part of the 30S ribosomal subunit. Contacts proteins S5 and S12.

Functionally, one of the primary rRNA binding proteins, it binds directly to 16S rRNA central domain where it helps coordinate assembly of the platform of the 30S subunit. This chain is Small ribosomal subunit protein uS8, found in Paracidovorax citrulli (strain AAC00-1) (Acidovorax citrulli).